A 464-amino-acid polypeptide reads, in one-letter code: Argininosuccinate lyase (464 aa).

Belongs to the lyase 1 family. Argininosuccinate lyase subfamily.

It is found in the cytoplasm. The catalysed reaction is 2-(N(omega)-L-arginino)succinate = fumarate + L-arginine. The protein operates within amino-acid biosynthesis; L-arginine biosynthesis; L-arginine from L-ornithine and carbamoyl phosphate: step 3/3. The chain is Argininosuccinate lyase from Pseudomonas entomophila (strain L48).